The sequence spans 356 residues: Histidinol-phosphate aminotransferase (356 aa).

At K208 the chain carries N6-(pyridoxal phosphate)lysine.

Belongs to the class-II pyridoxal-phosphate-dependent aminotransferase family. Histidinol-phosphate aminotransferase subfamily. Homodimer. The cofactor is pyridoxal 5'-phosphate.

It catalyses the reaction L-histidinol phosphate + 2-oxoglutarate = 3-(imidazol-4-yl)-2-oxopropyl phosphate + L-glutamate. It functions in the pathway amino-acid biosynthesis; L-histidine biosynthesis; L-histidine from 5-phospho-alpha-D-ribose 1-diphosphate: step 7/9. The polypeptide is Histidinol-phosphate aminotransferase (Lactococcus lactis subsp. cremoris (strain MG1363)).